Reading from the N-terminus, the 913-residue chain is Epithelial discoidin domain-containing receptor 1 (913 aa).

An N-terminal signal peptide occupies residues 1 to 18 (MGPEALSSLLLLLLVASG). Topologically, residues 21–417 (DMKGHFDPAK…VAKAEGSPTA (397 aa)) are extracellular. The 155-residue stretch at 31–185 (CRYALGMQDR…VCLRVELYGC (155 aa)) folds into the F5/8 type C domain. 2 cysteine pairs are disulfide-bonded: cysteine 31–cysteine 185 and cysteine 74–cysteine 177. A DS-like domain region spans residues 192-367 (LSYTAPVGQT…LFSEISFISD (176 aa)). Asparagine 211, glutamine 230, aspartate 233, valine 235, tyrosine 253, and tyrosine 255 together coordinate Ca(2+). N-linked (GlcNAc...) asparagine glycosylation occurs at asparagine 211. Asparagine 260 carries N-linked (GlcNAc...) asparagine glycosylation. A disulfide bridge connects residues cysteine 303 and cysteine 348. Serine 360 and glutamate 361 together coordinate Ca(2+). N-linked (GlcNAc...) asparagine glycans are attached at residues asparagine 370 and asparagine 394. The helical transmembrane segment at 418 to 438 (ILIGCLVAIILLLLLIIALML) threads the bilayer. Topologically, residues 439 to 913 (WRLHWRRLLS…FLAEDALNTV (475 aa)) are cytoplasmic. The segment at 470 to 499 (ILINNRPGPREPPPYQEPRPRGNPPHSAPC) is disordered. Positions 479–496 (REPPPYQEPRPRGNPPHS) are enriched in pro residues. The PPxY motif signature appears at 481–484 (PPPY). Phosphotyrosine; by autocatalysis occurs at positions 484, 513, and 520. The Protein kinase domain maps to 610-905 (LRFKEKLGEG…PPFSQLHRFL (296 aa)). 616–624 (LGEGQFGEV) serves as a coordination point for ATP. At serine 631 the chain carries Phosphoserine. Lysine 655 provides a ligand contact to ATP. The residue at position 740 (tyrosine 740) is a Phosphotyrosine; by autocatalysis. The active-site Proton acceptor is aspartate 766. Residues tyrosine 792, tyrosine 796, and tyrosine 797 each carry the phosphotyrosine; by autocatalysis modification.

The protein belongs to the protein kinase superfamily. Tyr protein kinase family. Insulin receptor subfamily. Homodimer. Interacts (via PPxY motif) with WWC1 (via WW domains) in a collagen-regulated manner. Forms a tripartite complex with WWC1 and PRKCZ, but predominantly in the absence of collagen. Interacts (tyrosine phosphorylated) with SHC1. Interacts with SRC. Interacts with MYH9. Interacts with CDH1. Interacts with PTPN11. Interacts with NCK2. Post-translationally, autophosphorylated in response to fibrillar collagen binding. In terms of processing, glycosylation of Asn-211, but apparently not of Asn-260 or Asn-394, prevents autophosphorylation from occurring in the absence of collagen. Detected in T-47D, MDA-MB-175 and HBL-100 breast carcinoma cells, A-431 epidermoid carcinoma cells, SW48 and SNU-C2B colon carcinoma cells and Hs 294T melanoma cells (at protein level). Expressed at low levels in most adult tissues and is highest in the brain, lung, placenta and kidney. Lower levels of expression are detected in melanocytes, heart, liver, skeletal muscle and pancreas. Abundant in breast carcinoma cell lines. In the colonic mucosa, expressed in epithelia but not in the connective tissue of the lamina propria. In the thyroid gland, expressed in the epithelium of the thyroid follicles. In pancreas, expressed in the islets of Langerhans cells, but not in the surrounding epithelial cells of the exocrine pancreas. In kidney, expressed in the epithelia of the distal tubules. Not expressed in connective tissue, endothelial cells, adipose tissue, muscle cells or cells of hematopoietic origin.

Its subcellular location is the cell membrane. It localises to the secreted. It carries out the reaction L-tyrosyl-[protein] + ATP = O-phospho-L-tyrosyl-[protein] + ADP + H(+). Inhibited by the multi-targeted cancer drugs imatinib and ponatinib. Tyrosine kinase that functions as a cell surface receptor for fibrillar collagen and regulates cell attachment to the extracellular matrix, remodeling of the extracellular matrix, cell migration, differentiation, survival and cell proliferation. Collagen binding triggers a signaling pathway that involves SRC and leads to the activation of MAP kinases. Regulates remodeling of the extracellular matrix by up-regulation of the matrix metalloproteinases MMP2, MMP7 and MMP9, and thereby facilitates cell migration and wound healing. Required for normal blastocyst implantation during pregnancy, for normal mammary gland differentiation and normal lactation. Required for normal ear morphology and normal hearing. Promotes smooth muscle cell migration, and thereby contributes to arterial wound healing. Also plays a role in tumor cell invasion. Phosphorylates PTPN11. This Homo sapiens (Human) protein is Epithelial discoidin domain-containing receptor 1 (DDR1).